The sequence spans 138 residues: Ferredoxin-2 (138 aa).

A 2Fe-2S ferredoxin-type domain is found at 27–117; sequence ADANLQSTDF…DAKIVYNLKH (91 aa). [2Fe-2S] cluster-binding residues include cysteine 62, cysteine 67, cysteine 70, and cysteine 100.

This sequence belongs to the 2Fe2S plant-type ferredoxin family. It depends on [2Fe-2S] cluster as a cofactor.

Ferredoxins are iron-sulfur proteins that transfer electrons in a wide variety of metabolic reactions. This Haloarcula marismortui (strain ATCC 43049 / DSM 3752 / JCM 8966 / VKM B-1809) (Halobacterium marismortui) protein is Ferredoxin-2 (fer2).